The sequence spans 60 residues: LKCNKLVPLAYKTCPAGKNLCYKMYMVANKKVPVKRGCIDVCPKKSLLVKYECCNTDRCN.

4 cysteine pairs are disulfide-bonded: C3/C21, C14/C38, C42/C53, and C54/C59.

The protein belongs to the three-finger toxin family. Short-chain subfamily. Type IA cytotoxin sub-subfamily. As to quaternary structure, monomer in solution; Homodimer and oligomer (homohexamer) in the presence of negatively charged lipids forming a pore with a size ranging between 20 and 30 Angstroms. As to expression, expressed by the venom gland.

It is found in the secreted. Its subcellular location is the target cell membrane. Its function is as follows. Shows cytolytic activity on many different cells by forming pore in lipid membranes. In vivo, increases heart rate or kill the animal by cardiac arrest. In addition, it binds to heparin with high affinity, interacts with Kv channel-interacting protein 1 (KCNIP1) in a calcium-independent manner, and binds to integrin alpha-V/beta-3 (ITGAV/ITGB3) with moderate affinity. The sequence is that of Cytotoxin sagitoxin from Naja sagittifera (Andaman cobra).